Consider the following 232-residue polypeptide: Phosphoglycolate phosphatase (232 aa).

Residue Asp8 is the Nucleophile of the active site. Residues Asp8 and Asp10 each coordinate Mg(2+). Lys155 serves as a coordination point for substrate. Residues Asp178 and Asp182 each coordinate Mg(2+).

This sequence belongs to the archaeal SPP-like hydrolase family. The cofactor is Mg(2+).

It catalyses the reaction 2-phosphoglycolate + H2O = glycolate + phosphate. Catalyzes the dephosphorylation of 2-phosphoglycolate. This Methanospirillum hungatei JF-1 (strain ATCC 27890 / DSM 864 / NBRC 100397 / JF-1) protein is Phosphoglycolate phosphatase.